The primary structure comprises 335 residues: Phosphoserine phosphatase RsbU (335 aa).

Residues aspartate 123–arginine 333 enclose the PPM-type phosphatase domain.

It carries out the reaction O-phospho-L-serine + H2O = L-serine + phosphate. The catalysed reaction is O-phospho-D-serine + H2O = D-serine + phosphate. Its activity is regulated as follows. Stimulated by a long-lived interaction with RsbT. Functionally, positive regulator of sigma-B activity. Dephosphorylates RsbV in response to environmental stress conveyed from the RsbXST module. In Bacillus subtilis (strain 168), this protein is Phosphoserine phosphatase RsbU (rsbU).